Reading from the N-terminus, the 145-residue chain is D-aminoacyl-tRNA deacylase (145 aa).

The short motif at 137 to 138 (GP) is the Gly-cisPro motif, important for rejection of L-amino acids element.

The protein belongs to the DTD family. As to quaternary structure, homodimer.

It is found in the cytoplasm. The enzyme catalyses glycyl-tRNA(Ala) + H2O = tRNA(Ala) + glycine + H(+). It carries out the reaction a D-aminoacyl-tRNA + H2O = a tRNA + a D-alpha-amino acid + H(+). Functionally, an aminoacyl-tRNA editing enzyme that deacylates mischarged D-aminoacyl-tRNAs. Also deacylates mischarged glycyl-tRNA(Ala), protecting cells against glycine mischarging by AlaRS. Acts via tRNA-based rather than protein-based catalysis; rejects L-amino acids rather than detecting D-amino acids in the active site. By recycling D-aminoacyl-tRNA to D-amino acids and free tRNA molecules, this enzyme counteracts the toxicity associated with the formation of D-aminoacyl-tRNA entities in vivo and helps enforce protein L-homochirality. This is D-aminoacyl-tRNA deacylase from Lactobacillus gasseri (strain ATCC 33323 / DSM 20243 / BCRC 14619 / CIP 102991 / JCM 1131 / KCTC 3163 / NCIMB 11718 / NCTC 13722 / AM63).